The following is a 182-amino-acid chain: Epoxyqueuosine reductase QueH (182 aa).

The [4Fe-4S] cluster site is built by C10, C11, C85, and C88. A disulfide bridge connects residues C165 and C167.

This sequence belongs to the QueH family.

The enzyme catalyses epoxyqueuosine(34) in tRNA + AH2 = queuosine(34) in tRNA + A + H2O. The protein operates within tRNA modification; tRNA-queuosine biosynthesis. Catalyzes the conversion of epoxyqueuosine (oQ) to queuosine (Q), which is a hypermodified base found in the wobble positions of tRNA(Asp), tRNA(Asn), tRNA(His) and tRNA(Tyr). This Dehalococcoides mccartyi (strain ATCC BAA-2266 / KCTC 15142 / 195) (Dehalococcoides ethenogenes (strain 195)) protein is Epoxyqueuosine reductase QueH.